Reading from the N-terminus, the 626-residue chain is Elongation factor 4 (626 aa).

Residues 14–195 enclose the tr-type G domain; the sequence is SVIRNFCIIA…QIVMDVPAPH (182 aa). GTP-binding positions include 26–31 and 142–145; these read DHGKST and NKID. The disordered stretch occupies residues 603 to 626; sequence LSTGEDSNDRDTKDKIRAAQKTEG. Basic and acidic residues predominate over residues 609-626; it reads SNDRDTKDKIRAAQKTEG.

Belongs to the TRAFAC class translation factor GTPase superfamily. Classic translation factor GTPase family. LepA subfamily.

Its subcellular location is the cell membrane. It catalyses the reaction GTP + H2O = GDP + phosphate + H(+). In terms of biological role, required for accurate and efficient protein synthesis under certain stress conditions. May act as a fidelity factor of the translation reaction, by catalyzing a one-codon backward translocation of tRNAs on improperly translocated ribosomes. Back-translocation proceeds from a post-translocation (POST) complex to a pre-translocation (PRE) complex, thus giving elongation factor G a second chance to translocate the tRNAs correctly. Binds to ribosomes in a GTP-dependent manner. The polypeptide is Elongation factor 4 (Bifidobacterium longum (strain DJO10A)).